We begin with the raw amino-acid sequence, 126 residues long: Holo-[acyl-carrier-protein] synthase (126 aa).

Residues Asp9 and Glu58 each contribute to the Mg(2+) site.

It belongs to the P-Pant transferase superfamily. AcpS family. The cofactor is Mg(2+).

The protein resides in the cytoplasm. The catalysed reaction is apo-[ACP] + CoA = holo-[ACP] + adenosine 3',5'-bisphosphate + H(+). Transfers the 4'-phosphopantetheine moiety from coenzyme A to a Ser of acyl-carrier-protein. The sequence is that of Holo-[acyl-carrier-protein] synthase from Vibrio atlanticus (strain LGP32) (Vibrio splendidus (strain Mel32)).